Here is a 751-residue protein sequence, read N- to C-terminus: Myb-related protein A (751 aa).

The segment at M1 to E22 is disordered. 3 HTH myb-type domains span residues K30–L81, N82–V137, and K138–V188. 3 DNA-binding regions (H-T-H motif) span residues W58–L81, W110–L133, and W161–M184. K199 is covalently cross-linked (Glycyl lysine isopeptide (Lys-Gly) (interchain with G-Cter in SUMO2)). Residues I230–S294 form a transcriptional activation domain region. The segment at S297–P552 is negative regulatory domain. The residue at position 393 (K393) is an N6-acetyllysine. Glycyl lysine isopeptide (Lys-Gly) (interchain with G-Cter in SUMO2) cross-links involve residues K591 and K601.

As to quaternary structure, component of the DREAM complex (also named LINC complex) at least composed of E2F4, E2F5, LIN9, LIN37, LIN52, LIN54, MYBL1, MYBL2, RBL1, RBL2, RBBP4, TFDP1 and TFDP2. The complex exists in quiescent cells where it represses cell cycle-dependent genes. It dissociates in S phase when LIN9, LIN37, LIN52 and LIN54 form a subcomplex that binds to MYBL2. In terms of tissue distribution, predominantly in the testis. Very low levels in the ovaries, spleen and brain.

It localises to the nucleus. In terms of biological role, transcription factor that specifically recognizes the sequence 5'-YAAC[GT]G-3'. Acts as a master regulator of male meiosis by promoting expression of piRNAs: activates expression of both piRNA precursor RNAs and expression of protein-coding genes involved in piRNA metabolism, such as PIWIL1. The piRNA metabolic process mediates the repression of transposable elements during meiosis by forming complexes composed of piRNAs and Piwi proteins and governs the methylation and subsequent repression of transposons, which is essential for the germline integrity. Transcriptional activator of SOX30. This chain is Myb-related protein A (Mybl1), found in Mus musculus (Mouse).